The sequence spans 420 residues: Methanogen homoaconitase large subunit (420 aa).

3 residues coordinate [4Fe-4S] cluster: cysteine 302, cysteine 362, and cysteine 365.

This sequence belongs to the aconitase/IPM isomerase family. LeuC type 2 subfamily. Heterotetramer of 2 HacA and 2 HacB proteins. [4Fe-4S] cluster is required as a cofactor.

It carries out the reaction (2R)-homocitrate = (2R,3S)-homoisocitrate. The catalysed reaction is (2R)-homocitrate = cis-homoaconitate + H2O. The enzyme catalyses (2R,3S)-homoisocitrate = cis-homoaconitate + H2O. It catalyses the reaction cis-(homo)2aconitate + H2O = (2R,3S)-iso(homo)2citrate. It carries out the reaction cis-(homo)3aconitate + H2O = (2R,3S)-iso(homo)3citrate. The catalysed reaction is (R)-malate = maleate + H2O. The enzyme catalyses cis-aconitate + H2O = D-threo-isocitrate. Its pathway is organic acid metabolism; 2-oxosuberate biosynthesis. In terms of biological role, component of a hydro-lyase with broad substrate specificity for cis-unsaturated tricarboxylic acids. Catalyzes both the reversible dehydration of (R)-homocitrate ((R)-2-hydroxybutane-1,2,4-tricarboxylate) to produce cis-homoaconitate ((Z)-but-1-ene-1,2,4-tricarboxylate), and its hydration to homoisocitrate ((1R,2S)-1-hydroxybutane-1,2,4-tricarboxylate). Is also able to hydrate the analogous longer chain substrates cis-homo(2)-aconitate, cis-homo(3)-aconitate, and even the non-physiological cis-homo(4)-aconitate with similar efficiency. These reactions are part of the biosynthesis pathway of coenzyme B. Can also catalyze the hydration of maleate to (R)-malate, and that of cis-aconitate. Cannot catalyze the hydration of citraconate and the dehydration of (S)-homocitrate, citramalate, 2-isopropylmalate, 3-isopropylmalate, citrate or threo-DL-isocitrate. This is Methanogen homoaconitase large subunit (hacA) from Methanocaldococcus jannaschii (strain ATCC 43067 / DSM 2661 / JAL-1 / JCM 10045 / NBRC 100440) (Methanococcus jannaschii).